A 163-amino-acid polypeptide reads, in one-letter code: Lectin-like protein EP153R (163 aa).

Over 1–26 (MFSNKKYIGLINKKEGLKKKIDDYSI) the chain is Cytoplasmic. Residues 27–47 (LIIGILIGTNILSLIINIIGE) traverse the membrane as a helical segment. The Extracellular segment spans residues 48–163 (INKPICYQNN…YTDLLFICSK (116 aa)). A disulfide bridge links Cys63 with Cys74. Residues 63–162 (CPKDWVGYNN…HYTDLLFICS (100 aa)) form a lectin-like region. 8 N-linked (GlcNAc...) asparagine; by host glycosylation sites follow: Asn84, Asn96, Asn97, Asn103, Asn109, Asn115, Asn129, and Asn135. Cys92 and Cys161 are oxidised to a cystine.

It belongs to the asfivirus lectin-like protein family. Homodimer.

It localises to the host endoplasmic reticulum membrane. Functionally, down-regulates MHC-I expression by impairing the appropriate configuration or presentation into the plasma membrane of the latter. Participates in viral hemadsorption, which may help viral spread. Reduces the transactivating activity of host TP53, thus inhibiting apoptosis. Non-essential for virus growth in swine macrophage cell cultures. The polypeptide is Lectin-like protein EP153R (African swine fever virus (isolate Warthog/Namibia/Wart80/1980) (ASFV)).